We begin with the raw amino-acid sequence, 336 residues long: Ornithine carbamoyltransferase (336 aa).

Residues 56 to 59, Q83, R107, and 134 to 137 each bind carbamoyl phosphate; these read STRT and HPTQ. Residues N168, D232, and 236–237 contribute to the L-ornithine site; that span reads SM. Carbamoyl phosphate is bound by residues 274 to 275 and R320; that span reads CL.

It belongs to the aspartate/ornithine carbamoyltransferase superfamily. OTCase family.

The protein resides in the cytoplasm. It carries out the reaction carbamoyl phosphate + L-ornithine = L-citrulline + phosphate + H(+). It participates in amino-acid biosynthesis; L-arginine biosynthesis; L-arginine from L-ornithine and carbamoyl phosphate: step 1/3. In terms of biological role, reversibly catalyzes the transfer of the carbamoyl group from carbamoyl phosphate (CP) to the N(epsilon) atom of ornithine (ORN) to produce L-citrulline. The protein is Ornithine carbamoyltransferase of Erwinia tasmaniensis (strain DSM 17950 / CFBP 7177 / CIP 109463 / NCPPB 4357 / Et1/99).